Reading from the N-terminus, the 255-residue chain is DNA repair protein RecO (255 aa).

This sequence belongs to the RecO family.

In terms of biological role, involved in DNA repair and RecF pathway recombination. This Acidithiobacillus ferrooxidans (strain ATCC 23270 / DSM 14882 / CIP 104768 / NCIMB 8455) (Ferrobacillus ferrooxidans (strain ATCC 23270)) protein is DNA repair protein RecO.